Reading from the N-terminus, the 670-residue chain is Probable membrane-anchored ferredoxin csal_0991 (670 aa).

The next 5 membrane-spanning stretches (helical) occupy residues 2–22 (LDIL…IGAV), 68–90 (VATA…LGLA), 94–113 (LGWL…LFVA), 135–155 (LMAF…VLPA), and 159–179 (GWLV…ELVF). 4Fe-4S ferredoxin-type domains lie at 241-271 (WNQL…PLNP) and 316-347 (GTAL…HVDA). [4Fe-4S] cluster contacts are provided by Cys-250, Cys-253, Cys-256, Cys-260, Cys-328, Cys-331, Cys-334, and Cys-338. Residues 648–670 (NTPPATPASHDTAASQATEEVLS) form a disordered region. Polar residues predominate over residues 659–670 (TAASQATEEVLS).

The cofactor is [4Fe-4S] cluster.

The protein localises to the cell inner membrane. Participates in the electron transfer process during N,N-dimethylglycine (DMG) degradation to sarcosine. Probably transfers the electrons from N,N-dimethylglycine/sarcosine dehydrogenase (DMGDH) to the electron transfer flavoprotein (ETF) EtfA-EtfB. The polypeptide is Probable membrane-anchored ferredoxin csal_0991 (Chromohalobacter salexigens (strain ATCC BAA-138 / DSM 3043 / CIP 106854 / NCIMB 13768 / 1H11)).